A 683-amino-acid chain; its full sequence is Protein kinase C eta type (683 aa).

One can recognise a C2 domain in the interval methionine 1–phenylalanine 118. Serine 28 and serine 32 each carry phosphoserine. 2 Phorbol-ester/DAG-type zinc fingers span residues glycine 171–cysteine 222 and proline 245–cysteine 295. Position 317 is a phosphoserine (serine 317). The Protein kinase domain occupies phenylalanine 355 to phenylalanine 614. Residues leucine 361–valine 369 and lysine 384 contribute to the ATP site. Aspartate 479 (proton acceptor) is an active-site residue. Residue threonine 513 is modified to Phosphothreonine; by PDPK1. Residues lysine 615 to proline 683 form the AGC-kinase C-terminal domain. Threonine 656 carries the phosphothreonine modification. The residue at position 675 (serine 675) is a Phosphoserine.

It belongs to the protein kinase superfamily. AGC Ser/Thr protein kinase family. PKC subfamily. Interacts with FYN. Interacts with RALA. Interacts with DGKQ.

The protein localises to the cytoplasm. The enzyme catalyses L-seryl-[protein] + ATP = O-phospho-L-seryl-[protein] + ADP + H(+). The catalysed reaction is L-threonyl-[protein] + ATP = O-phospho-L-threonyl-[protein] + ADP + H(+). Novel PKCs (PRKCD, PRKCE, PRKCH and PRKCQ) are calcium-insensitive, but activated by diacylglycerol (DAG) and phosphatidylserine. Three specific sites; Thr-513 (activation loop of the kinase domain), Thr-656 (turn motif) and Ser-675 (hydrophobic region), need to be phosphorylated for its full activation. Calcium-independent, phospholipid- and diacylglycerol (DAG)-dependent serine/threonine-protein kinase that is involved in the regulation of cell differentiation in keratinocytes and pre-B cell receptor, mediates regulation of epithelial tight junction integrity and foam cell formation, and is required for glioblastoma proliferation and apoptosis prevention in MCF-7 cells. In keratinocytes, binds and activates the tyrosine kinase FYN, which in turn blocks epidermal growth factor receptor (EGFR) signaling and leads to keratinocyte growth arrest and differentiation. Associates with the cyclin CCNE1-CDK2-CDKN1B complex and inhibits CDK2 kinase activity, leading to RB1 dephosphorylation and thereby G1 arrest in keratinocytes. In association with RALA activates actin depolymerization, which is necessary for keratinocyte differentiation. In the pre-B cell receptor signaling, functions downstream of BLNK by up-regulating IRF4, which in turn activates L chain gene rearrangement. Regulates epithelial tight junctions (TJs) by phosphorylating occludin (OCLN) on threonine residues, which is necessary for the assembly and maintenance of TJs. In association with PLD2 and via TLR4 signaling, is involved in lipopolysaccharide (LPS)-induced RGS2 down-regulation and foam cell formation. Upon PMA stimulation, mediates glioblastoma cell proliferation by activating the mTOR pathway, the PI3K/AKT pathway and the ERK1-dependent phosphorylation of ELK1. Involved in the protection of glioblastoma cells from irradiation-induced apoptosis by preventing caspase-9 activation. In camptothecin-treated MCF-7 cells, regulates NF-kappa-B upstream signaling by activating IKBKB, and confers protection against DNA damage-induced apoptosis. Promotes oncogenic functions of ATF2 in the nucleus while blocking its apoptotic function at mitochondria. Phosphorylates ATF2 which promotes its nuclear retention and transcriptional activity and negatively regulates its mitochondrial localization. The polypeptide is Protein kinase C eta type (Prkch) (Rattus norvegicus (Rat)).